We begin with the raw amino-acid sequence, 880 residues long: Alanine--tRNA ligase (880 aa).

Positions 567, 571, 669, and 673 each coordinate Zn(2+).

Belongs to the class-II aminoacyl-tRNA synthetase family. Zn(2+) serves as cofactor.

The protein localises to the cytoplasm. The catalysed reaction is tRNA(Ala) + L-alanine + ATP = L-alanyl-tRNA(Ala) + AMP + diphosphate. In terms of biological role, catalyzes the attachment of alanine to tRNA(Ala) in a two-step reaction: alanine is first activated by ATP to form Ala-AMP and then transferred to the acceptor end of tRNA(Ala). Also edits incorrectly charged Ser-tRNA(Ala) and Gly-tRNA(Ala) via its editing domain. The chain is Alanine--tRNA ligase from Bacillus cereus (strain ATCC 14579 / DSM 31 / CCUG 7414 / JCM 2152 / NBRC 15305 / NCIMB 9373 / NCTC 2599 / NRRL B-3711).